The chain runs to 343 residues: ATP-dependent 6-phosphofructokinase (343 aa).

ATP-binding positions include Gly-10, 73 to 74 (RV), and 103 to 106 (GEGT). Glu-104 is a binding site for Mg(2+). Substrate is bound by residues 126 to 128 (TID), Arg-163, 170 to 172 (MGR), Glu-223, Arg-267, and 273 to 276 (HIQR). Residue Asp-128 is the Proton acceptor of the active site.

The protein belongs to the phosphofructokinase type A (PFKA) family. Mixed-substrate PFK group III subfamily. As to quaternary structure, homodimer or homotetramer. The cofactor is Mg(2+).

The protein resides in the cytoplasm. It carries out the reaction beta-D-fructose 6-phosphate + ATP = beta-D-fructose 1,6-bisphosphate + ADP + H(+). The enzyme catalyses D-tagatofuranose 6-phosphate + ATP = D-tagatofuranose 1,6-bisphosphate + ADP + H(+). Its pathway is carbohydrate degradation; glycolysis; D-glyceraldehyde 3-phosphate and glycerone phosphate from D-glucose: step 3/4. Catalyzes the phosphorylation of D-fructose 6-phosphate to fructose 1,6-bisphosphate by ATP, the first committing step of glycolysis. Can also catalyze the phosphorylation of tagatose-6-phosphate. The chain is ATP-dependent 6-phosphofructokinase from Mycobacterium tuberculosis (strain CDC 1551 / Oshkosh).